A 310-amino-acid polypeptide reads, in one-letter code: tRNA-dihydrouridine(16) synthase (310 aa).

Residues 7–9 and Gln-68 each bind FMN; that span reads PMQ. The Proton donor role is filled by Cys-98. Residues Lys-139, 200–202, and 224–225 each bind FMN; these read NGE and GR.

It belongs to the Dus family. DusC subfamily. It depends on FMN as a cofactor.

The enzyme catalyses 5,6-dihydrouridine(16) in tRNA + NADP(+) = uridine(16) in tRNA + NADPH + H(+). The catalysed reaction is 5,6-dihydrouridine(16) in tRNA + NAD(+) = uridine(16) in tRNA + NADH + H(+). Catalyzes the synthesis of 5,6-dihydrouridine (D), a modified base found in the D-loop of most tRNAs, via the reduction of the C5-C6 double bond in target uridines. Specifically modifies U16 in tRNAs. The protein is tRNA-dihydrouridine(16) synthase of Haemophilus influenzae (strain ATCC 51907 / DSM 11121 / KW20 / Rd).